The primary structure comprises 130 residues: MPNSMEEMNLRRSRRRLPRGVIHIQASFNNTIITVTDTRGRVVSWSSAGACGFKGARKSTPFAAQTAAENAIRILIDRGLKQAEVMISGPGPGRDTALRAIRRSGIVLNFVRDVTPMPHNGCRPPGKRRV.

This sequence belongs to the universal ribosomal protein uS11 family. As to quaternary structure, part of the 30S ribosomal subunit.

The protein localises to the plastid. This is Small ribosomal subunit protein uS11c from Aneura mirabilis (Parasitic liverwort).